A 74-amino-acid chain; its full sequence is Protein krueppel (74 aa).

C2H2-type zinc fingers lie at residues E1–H4, F10–H32, Y38–H60, and Y66–K74.

The protein belongs to the krueppel C2H2-type zinc-finger protein family.

It is found in the nucleus. Krueppel is a gap class segmentation protein. This Bradysia coprophila (Dark-winged fungus gnat) protein is Protein krueppel (Kr).